Here is a 168-residue protein sequence, read N- to C-terminus: 6,7-dimethyl-8-ribityllumazine synthase (168 aa).

Residues phenylalanine 24, 58–60, and 82–84 each bind 5-amino-6-(D-ribitylamino)uracil; these read ALE and AVI. 87–88 contacts (2S)-2-hydroxy-3-oxobutyl phosphate; that stretch reads ET. Residue histidine 90 is the Proton donor of the active site. Asparagine 115 contributes to the 5-amino-6-(D-ribitylamino)uracil binding site. Arginine 129 serves as a coordination point for (2S)-2-hydroxy-3-oxobutyl phosphate.

Belongs to the DMRL synthase family.

The catalysed reaction is (2S)-2-hydroxy-3-oxobutyl phosphate + 5-amino-6-(D-ribitylamino)uracil = 6,7-dimethyl-8-(1-D-ribityl)lumazine + phosphate + 2 H2O + H(+). Its pathway is cofactor biosynthesis; riboflavin biosynthesis; riboflavin from 2-hydroxy-3-oxobutyl phosphate and 5-amino-6-(D-ribitylamino)uracil: step 1/2. In terms of biological role, catalyzes the formation of 6,7-dimethyl-8-ribityllumazine by condensation of 5-amino-6-(D-ribitylamino)uracil with 3,4-dihydroxy-2-butanone 4-phosphate. This is the penultimate step in the biosynthesis of riboflavin. This is 6,7-dimethyl-8-ribityllumazine synthase from Paraburkholderia xenovorans (strain LB400).